Here is a 208-residue protein sequence, read N- to C-terminus: FMN-dependent NADH:quinone oxidoreductase 4 (208 aa).

This sequence belongs to the azoreductase type 1 family. In terms of assembly, homodimer. The cofactor is FMN.

The catalysed reaction is 2 a quinone + NADH + H(+) = 2 a 1,4-benzosemiquinone + NAD(+). The enzyme catalyses N,N-dimethyl-1,4-phenylenediamine + anthranilate + 2 NAD(+) = 2-(4-dimethylaminophenyl)diazenylbenzoate + 2 NADH + 2 H(+). Quinone reductase that provides resistance to thiol-specific stress caused by electrophilic quinones. Functionally, also exhibits azoreductase activity. Catalyzes the reductive cleavage of the azo bond in aromatic azo compounds to the corresponding amines. This chain is FMN-dependent NADH:quinone oxidoreductase 4, found in Bacillus cereus (strain ATCC 10987 / NRS 248).